The primary structure comprises 512 residues: MSQDQPIVLDPTYASFDAAARPADLGATHFIGIGGAGMSVLAEMLHAEGVSVDGSDRSHSAKTDRLETLGITVEFGQRAENVAQAETVVYSSAIKPDNPEIVAAHAAGKRIVHRSDILALLMNGKRAVTVAGAHGKTTTSSMLSHILVNAGADPSYAIGGFIQGPDGTTLDGGHAGKGDILVAEADESDGSFAKYHPTIAIITNCEADHLDHYGDEAHYRAAFVAHAGRATGHVIISIDDPDGLAVLEAMPADVKSHTVAYGTTARESLPDLGGAAYVWIASESETAGSGVEQLTLHLPAAVTAGEPVSQSVALKVPGVHNARNAAAAISAAVLLGVSPADAAKAAGTFLGAARRFQVRGTVKQVTVVDDYAHHPTEIAALLDAARRRYPDSTIRVIFQPHLFSRTKFFAHQFAESLAKADDVIITGIFPAREKQADFPDISPSTIVDAAAGLKDASAGTWIQPVEDMCLAAKMMAMRAHHGDVIFTVGAGDITDMDQVLLTALEAHRESCE.

ATP is bound at residue 132 to 138; sequence GAHGKTT.

It belongs to the MurCDEF family.

It is found in the cytoplasm. It catalyses the reaction UDP-N-acetyl-alpha-D-muramate + L-alanine + ATP = UDP-N-acetyl-alpha-D-muramoyl-L-alanine + ADP + phosphate + H(+). It functions in the pathway cell wall biogenesis; peptidoglycan biosynthesis. In terms of biological role, cell wall formation. The protein is UDP-N-acetylmuramate--L-alanine ligase of Bifidobacterium longum subsp. infantis (strain ATCC 15697 / DSM 20088 / JCM 1222 / NCTC 11817 / S12).